The primary structure comprises 139 residues: D-ribose pyranase (139 aa).

The active-site Proton donor is the His20. Substrate is bound by residues Asp28, His106, and 128–130 (YAN).

Belongs to the RbsD / FucU family. RbsD subfamily. Homodecamer.

Its subcellular location is the cytoplasm. The enzyme catalyses beta-D-ribopyranose = beta-D-ribofuranose. It functions in the pathway carbohydrate metabolism; D-ribose degradation; D-ribose 5-phosphate from beta-D-ribopyranose: step 1/2. In terms of biological role, catalyzes the interconversion of beta-pyran and beta-furan forms of D-ribose. This Serratia proteamaculans (strain 568) protein is D-ribose pyranase.